A 539-amino-acid polypeptide reads, in one-letter code: CTP synthase (539 aa).

The amidoligase domain stretch occupies residues 1–268 (MADTKYIFVT…DETVLRKVGL (268 aa)). Residue S15 coordinates CTP. S15 serves as a coordination point for UTP. 16 to 21 (SLGKGI) provides a ligand contact to ATP. Y56 lines the L-glutamine pocket. D73 contacts ATP. Residues D73 and E143 each contribute to the Mg(2+) site. CTP is bound by residues 150-152 (DIE), 189-194 (KTKPTQ), and K225. Residues 189–194 (KTKPTQ) and K225 contribute to the UTP site. The Glutamine amidotransferase type-1 domain maps to 294–536 (TIALVGKYVE…IREAIKTRKK (243 aa)). An L-glutamine-binding site is contributed by G356. Catalysis depends on C383, which acts as the Nucleophile; for glutamine hydrolysis. L-glutamine is bound by residues 384 to 387 (LGMQ), E407, and R464. Active-site residues include H509 and E511.

This sequence belongs to the CTP synthase family. Homotetramer.

It catalyses the reaction UTP + L-glutamine + ATP + H2O = CTP + L-glutamate + ADP + phosphate + 2 H(+). The enzyme catalyses L-glutamine + H2O = L-glutamate + NH4(+). The catalysed reaction is UTP + NH4(+) + ATP = CTP + ADP + phosphate + 2 H(+). It functions in the pathway pyrimidine metabolism; CTP biosynthesis via de novo pathway; CTP from UDP: step 2/2. Allosterically activated by GTP, when glutamine is the substrate; GTP has no effect on the reaction when ammonia is the substrate. The allosteric effector GTP functions by stabilizing the protein conformation that binds the tetrahedral intermediate(s) formed during glutamine hydrolysis. Inhibited by the product CTP, via allosteric rather than competitive inhibition. In terms of biological role, catalyzes the ATP-dependent amination of UTP to CTP with either L-glutamine or ammonia as the source of nitrogen. Regulates intracellular CTP levels through interactions with the four ribonucleotide triphosphates. This Porphyromonas gingivalis (strain ATCC BAA-308 / W83) protein is CTP synthase.